The chain runs to 315 residues: Acetyl-coenzyme A carboxylase carboxyl transferase subunit alpha (315 aa).

The region spanning 32–289 (EIDLLEASLE…KQAFVDQLEQ (258 aa)) is the CoA carboxyltransferase C-terminal domain.

The protein belongs to the AccA family. As to quaternary structure, acetyl-CoA carboxylase is a heterohexamer composed of biotin carboxyl carrier protein (AccB), biotin carboxylase (AccC) and two subunits each of ACCase subunit alpha (AccA) and ACCase subunit beta (AccD).

The protein localises to the cytoplasm. The catalysed reaction is N(6)-carboxybiotinyl-L-lysyl-[protein] + acetyl-CoA = N(6)-biotinyl-L-lysyl-[protein] + malonyl-CoA. The protein operates within lipid metabolism; malonyl-CoA biosynthesis; malonyl-CoA from acetyl-CoA: step 1/1. In terms of biological role, component of the acetyl coenzyme A carboxylase (ACC) complex. First, biotin carboxylase catalyzes the carboxylation of biotin on its carrier protein (BCCP) and then the CO(2) group is transferred by the carboxyltransferase to acetyl-CoA to form malonyl-CoA. In Staphylococcus haemolyticus (strain JCSC1435), this protein is Acetyl-coenzyme A carboxylase carboxyl transferase subunit alpha.